A 96-amino-acid chain; its full sequence is Auxin-responsive protein SAUR29 (96 aa).

The protein belongs to the ARG7 family.

The protein localises to the cell membrane. Functionally, functions as a positive effector of cell expansion through modulation of auxin transport. Involved in thermo-responsiveness of plant architecture. Enhances plasma membrane H(+)-ATPase. The sequence is that of Auxin-responsive protein SAUR29 from Arabidopsis thaliana (Mouse-ear cress).